We begin with the raw amino-acid sequence, 370 residues long: Cyanuric acid amidohydrolase (370 aa).

The interval 1–103 (MQAQVFRVPM…TIFTVQKTDN (103 aa)) is RU A. Residues R51 and 82-83 (SG) contribute to the substrate site. The interval 113-250 (RLAVQQIFTR…NEIIVMGNSR (138 aa)) is RU B. K163 is a catalytic residue. Substrate contacts are provided by residues R195 and 233-234 (SA). The active-site Nucleophile is S233. An RU C region spans residues 256-370 (LVIGHAEMKD…GPVAVIARTA (115 aa)). E303 provides a ligand contact to Mg(2+). Residues R330 and 349 to 350 (SG) contribute to the substrate site. Residues S352, Q355, G356, P357, and G360 each coordinate Mg(2+).

The protein belongs to the cyclic amide hydrolase (CyAH) family. In terms of assembly, homotetramer.

The enzyme catalyses cyanurate + H2O = 1-carboxybiuret + H(+). The protein operates within xenobiotic degradation; atrazine degradation; biuret from cyanurate: step 1/1. Inhibited by barbituric acid. Its function is as follows. Responsible for the hydrolysis of cyanuric acid, an intermediate formed during catabolism of s-triazine based compounds in herbicides such as atrazine and polymers such as melamine. Catalyzes the hydrolytic opening of the s-triazine ring of cyanuric acid (2,4,6-trihydroxy-s-triazine) to yield carbon dioxide and carboxybiuret, which spontaneously decarboxylates to biuret. This Pseudomonas sp protein is Cyanuric acid amidohydrolase (trzD).